The primary structure comprises 740 residues: Alpha-1,6-mannosylglycoprotein 6-beta-N-acetylglucosaminyltransferase A (740 aa).

Over 1 to 13 the chain is Cytoplasmic; the sequence is MAFFTPWKLSSQK. A helical; Signal-anchor for type II membrane protein membrane pass occupies residues 14-30; the sequence is LGFFLVTFGFIWGMMLL. Topologically, residues 31–740 are lumenal; the sequence is HFTIQQRTQP…GQVALCKDCL (710 aa). Residues N109, N114, and N117 are each glycosylated (N-linked (GlcNAc...) asparagine). Cystine bridges form between C144–C182, C155–C195, C171–C337, C371–C625, C648–C723, C652–C725, C659–C712, C680–C701, and C736–C739. The sufficient for catalytic activity stretch occupies residues 212-740; that stretch reads NSLAEIRTDF…GQVALCKDCL (529 aa). An N-linked (GlcNAc...) asparagine glycan is attached at N333. 377–378 is a substrate binding site; that stretch reads DS. Residues N432 and N446 are each glycosylated (N-linked (GlcNAc...) asparagine). E525 contributes to the UDP-N-acetyl-alpha-D-glucosamine binding site. K553 provides a ligand contact to substrate.

This sequence belongs to the glycosyltransferase 18 family. N-glycosylated. In terms of processing, a secreted form is released from the membrane after cleavage by gamma-secretase.

Its subcellular location is the golgi apparatus membrane. It localises to the secreted. The enzyme catalyses N(4)-{beta-D-GlcNAc-(1-&gt;2)-[beta-D-GlcNAc-(1-&gt;4)]-alpha-D-Man-(1-&gt;3)-[beta-D-GlcNAc-(1-&gt;2)-alpha-D-Man-(1-&gt;6)]-beta-D-Man-(1-&gt;4)-beta-D-GlcNAc-(1-&gt;4)-beta-D-GlcNAc}-L-asparaginyl-[protein] + UDP-N-acetyl-alpha-D-glucosamine = N(4)-{beta-D-GlcNAc-(1-&gt;2)-[beta-D-GlcNAc-(1-&gt;4)]-alpha-D-Man-(1-&gt;3)-[beta-D-GlcNAc-(1-&gt;2)-[beta-D-GlcNAc-(1-&gt;6)]-alpha-D-Man-(1-&gt;6)]-beta-D-Man-(1-&gt;4)-beta-D-GlcNAc-(1-&gt;4)-beta-D-GlcNAc}-L-asparaginyl-[protein] + UDP + H(+). The protein operates within protein modification; protein glycosylation. Functionally, catalyzes the addition of N-acetylglucosamine (GlcNAc) in beta 1-6 linkage to the alpha-linked mannose of biantennary N-linked oligosaccharides. Catalyzes an important step in the biosynthesis of branched, complex-type N-glycans, such as those found on EGFR, TGFR (TGF-beta receptor) and CDH2. Via its role in the biosynthesis of complex N-glycans, plays an important role in the activation of cellular signaling pathways, reorganization of the actin cytoskeleton, cell-cell adhesion and cell migration. MGAT5-dependent EGFR N-glycosylation enhances the interaction between EGFR and LGALS3 and thereby prevents rapid EGFR endocytosis and prolongs EGFR signaling. Required for efficient interaction between TGFB1 and its receptor. Enhances activation of intracellular signaling pathways by several types of growth factors, including FGF2, PDGF, IGF, TGFB1 and EGF. MGAT5-dependent CDH2 N-glycosylation inhibits CDH2-mediated homotypic cell-cell adhesion and contributes to the regulation of downstream signaling pathways. Promotes cell migration. Contributes to the regulation of the inflammatory response. MGAT5-dependent TCR N-glycosylation enhances the interaction between TCR and LGALS3, limits agonist-induced TCR clustering, and thereby dampens TCR-mediated responses to antigens. Required for normal leukocyte evasation and accumulation at sites of inflammation. Inhibits attachment of monocytes to the vascular endothelium and subsequent monocyte diapedesis. Promotes proliferation of umbilical vein endothelial cells and angiogenesis, at least in part by promoting the release of the growth factor FGF2 from the extracellular matrix. This Cricetulus griseus (Chinese hamster) protein is Alpha-1,6-mannosylglycoprotein 6-beta-N-acetylglucosaminyltransferase A (MGAT5).